The primary structure comprises 436 residues: Homeobox protein PKNOX1 (436 aa).

A disordered region spans residues 23–50 (ELKTEQDPNCSDPDAEGVSPPPIESQTP). Phosphoserine is present on residues serine 33 and serine 41. One can recognise an MEIS N-terminal domain in the interval 80-163 (GSEGTTSASF…MNSETLLSGE (84 aa)). A DNA-binding region (homeobox; TALE-type) is located at residues 259–321 (SKNKRGVLPK…NARRRILQPM (63 aa)). The interval 401–436 (AGQSEDESVDSTEDEGGALAPTHISGLVLENSDSLQ) is disordered. A compositionally biased stretch (acidic residues) spans 404–416 (SEDESVDSTEDEG).

Belongs to the TALE/MEIS homeobox family. As to quaternary structure, interacts with MN1.

It is found in the nucleus. Functionally, activates transcription in the presence of PBX1A and HOXA1. Its function is as follows. (Microbial infection) In complex with PBX1, binds to the 5'-TGATTGAC-3' consensus sequence in the U5 region of Moloney murine leukemia virus and promotes viral transcription. This chain is Homeobox protein PKNOX1, found in Mus musculus (Mouse).